Reading from the N-terminus, the 241-residue chain is Diacetyl reductase [(S)-acetoin forming] (241 aa).

An NAD(+)-binding site is contributed by 6 to 30 (LVTGAGQGIGKAIALRLVKDGFAVA). Substrate is bound at residue Ser-139. The active-site Proton acceptor is Tyr-152. Lys-156 is an active-site residue.

Belongs to the short-chain dehydrogenases/reductases (SDR) family. Homotetramer.

It catalyses the reaction (S)-acetoin + NAD(+) = diacetyl + NADH + H(+). Functionally, catalyzes the irreversible reduction of 2,3-butanediol to (S)-acetoin in the presence of NADH. The protein is Diacetyl reductase [(S)-acetoin forming] (budC) of Raoultella terrigena (Klebsiella terrigena).